Consider the following 303-residue polypeptide: Beta-carotene 3-hydroxylase 2, chloroplastic (303 aa).

A chloroplast-targeting transit peptide spans 1 to 52; sequence MAAGLSTIAVTLKPLNRSSFSANHPISTAVFPPSLRFNGFRRRKILTVCFVV. The next 2 helical transmembrane spans lie at 96–116 and 130–150; these read YLIA…MAVY and VLEM…MEFW. Residues 143–270 form the Fatty acid hydroxylase domain; that stretch reads AAVGMEFWAR…KFKGVPYGLF (128 aa). A Histidine box-1 motif is present at residues 155–160; it reads HRALWH. A Histidine box-2 motif is present at residues 165 to 171; that stretch reads NMHESHH. The next 2 membrane-spanning stretches (helical) occupy residues 180–200 and 206–226; these read LNDV…YYGF and VPGL…AYMF. The Histidine box-3 motif lies at 228-233; it reads HDGLVH. Residues 254-258 carry the Histidine box-4 motif; that stretch reads HQLHH.

The protein belongs to the sterol desaturase family. In terms of assembly, homodimer. In terms of tissue distribution, expressed in leaves, flowers, stems, roots and siliques.

The protein resides in the plastid. It is found in the chloroplast membrane. It carries out the reaction all-trans-beta-carotene + 4 reduced [2Fe-2S]-[ferredoxin] + 2 O2 + 4 H(+) = all-trans-zeaxanthin + 4 oxidized [2Fe-2S]-[ferredoxin] + 2 H2O. Its function is as follows. Nonheme diiron monooxygenase involved in the biosynthesis of xanthophylls. Specific for beta-ring hydroxylations of beta-carotene. Also has a low activity toward the beta- and epsilon-rings of alpha-carotene. No activity with acyclic carotenoids such as lycopene and neurosporene. Uses ferredoxin as an electron donor. The polypeptide is Beta-carotene 3-hydroxylase 2, chloroplastic (BETA-OHASE 2) (Arabidopsis thaliana (Mouse-ear cress)).